A 327-amino-acid polypeptide reads, in one-letter code: tRNA N6-adenosine threonylcarbamoyltransferase (327 aa).

Residues histidine 109 and histidine 113 each contribute to the Fe cation site. Residues 132–136 (MVSGG), aspartate 165, glycine 178, aspartate 182, and asparagine 268 contribute to the substrate site. Aspartate 296 provides a ligand contact to Fe cation.

It belongs to the KAE1 / TsaD family. Requires Fe(2+) as cofactor.

The protein resides in the cytoplasm. It carries out the reaction L-threonylcarbamoyladenylate + adenosine(37) in tRNA = N(6)-L-threonylcarbamoyladenosine(37) in tRNA + AMP + H(+). Required for the formation of a threonylcarbamoyl group on adenosine at position 37 (t(6)A37) in tRNAs that read codons beginning with adenine. Is involved in the transfer of the threonylcarbamoyl moiety of threonylcarbamoyl-AMP (TC-AMP) to the N6 group of A37, together with TsaE and TsaB. TsaD likely plays a direct catalytic role in this reaction. The polypeptide is tRNA N6-adenosine threonylcarbamoyltransferase (Thermotoga neapolitana (strain ATCC 49049 / DSM 4359 / NBRC 107923 / NS-E)).